The primary structure comprises 321 residues: MARENHSLAAEFILIGFTNYPELKTLLFVVFSAIYLVTMVGNLGLVALIYVERRLLTPMYIFLGNLALMDSCCSCAVTPKMLENFFSEDRIISLYECMAQFYFLCLAETTDCFLLATMAYDRYVAICHPLQYHTMMSKTLCIRMTTGAFKAGNLHSMIHVGLLLRLTFCRSNKIHHFFCDILPLYRLSCTDPSINELMIYIFSIPIQIFTIATVLISYLCILLTVFKMKSKEGRGKAFSTCASHFLSVSIFYICLLMYIGPSEEGDKDTPVAIFYAIVIPLLNPFIYSLRNKEVINVLKKIMRNYNILKQTCSIANLFLIY.

At 1–25 the chain is on the extracellular side; that stretch reads MARENHSLAAEFILIGFTNYPELKT. Asn-5 carries an N-linked (GlcNAc...) asparagine glycan. A helical transmembrane segment spans residues 26–46; it reads LLFVVFSAIYLVTMVGNLGLV. At 47–54 the chain is on the cytoplasmic side; it reads ALIYVERR. A helical transmembrane segment spans residues 55–75; sequence LLTPMYIFLGNLALMDSCCSC. Over 76 to 97 the chain is Extracellular; the sequence is AVTPKMLENFFSEDRIISLYEC. Cys-97 and Cys-179 are disulfide-bonded. The chain crosses the membrane as a helical span at residues 98 to 118; the sequence is MAQFYFLCLAETTDCFLLATM. Residues 119-139 lie on the Cytoplasmic side of the membrane; the sequence is AYDRYVAICHPLQYHTMMSKT. Residues 140 to 160 traverse the membrane as a helical segment; sequence LCIRMTTGAFKAGNLHSMIHV. The Extracellular segment spans residues 161–205; the sequence is GLLLRLTFCRSNKIHHFFCDILPLYRLSCTDPSINELMIYIFSIP. The helical transmembrane segment at 206–226 threads the bilayer; that stretch reads IQIFTIATVLISYLCILLTVF. The Cytoplasmic segment spans residues 227 to 240; sequence KMKSKEGRGKAFST. A helical membrane pass occupies residues 241 to 261; that stretch reads CASHFLSVSIFYICLLMYIGP. At 262 to 268 the chain is on the extracellular side; it reads SEEGDKD. A helical membrane pass occupies residues 269–289; the sequence is TPVAIFYAIVIPLLNPFIYSL. Over 290-321 the chain is Cytoplasmic; sequence RNKEVINVLKKIMRNYNILKQTCSIANLFLIY.

Belongs to the G-protein coupled receptor 1 family.

The protein localises to the cell membrane. In terms of biological role, odorant receptor. The sequence is that of Olfactory receptor 5K4 (OR5K4) from Homo sapiens (Human).